The following is a 571-amino-acid chain: Proline--tRNA ligase (571 aa).

The protein belongs to the class-II aminoacyl-tRNA synthetase family. ProS type 1 subfamily. In terms of assembly, homodimer.

It is found in the cytoplasm. It carries out the reaction tRNA(Pro) + L-proline + ATP = L-prolyl-tRNA(Pro) + AMP + diphosphate. Catalyzes the attachment of proline to tRNA(Pro) in a two-step reaction: proline is first activated by ATP to form Pro-AMP and then transferred to the acceptor end of tRNA(Pro). As ProRS can inadvertently accommodate and process non-cognate amino acids such as alanine and cysteine, to avoid such errors it has two additional distinct editing activities against alanine. One activity is designated as 'pretransfer' editing and involves the tRNA(Pro)-independent hydrolysis of activated Ala-AMP. The other activity is designated 'posttransfer' editing and involves deacylation of mischarged Ala-tRNA(Pro). The misacylated Cys-tRNA(Pro) is not edited by ProRS. The polypeptide is Proline--tRNA ligase (Vibrio cholerae serotype O1 (strain ATCC 39541 / Classical Ogawa 395 / O395)).